The following is a 38-amino-acid chain: Photosystem II reaction center protein L (38 aa).

Residues 17-37 traverse the membrane as a helical segment; that stretch reads SLYWGLLLIFVLAVPFSNYFF.

Belongs to the PsbL family. As to quaternary structure, PSII is composed of 1 copy each of membrane proteins PsbA, PsbB, PsbC, PsbD, PsbE, PsbF, PsbH, PsbI, PsbJ, PsbK, PsbL, PsbM, PsbT, PsbX, PsbY, PsbZ, Psb30/Ycf12, at least 3 peripheral proteins of the oxygen-evolving complex and a large number of cofactors. It forms dimeric complexes.

The protein resides in the plastid. The protein localises to the chloroplast thylakoid membrane. Functionally, one of the components of the core complex of photosystem II (PSII). PSII is a light-driven water:plastoquinone oxidoreductase that uses light energy to abstract electrons from H(2)O, generating O(2) and a proton gradient subsequently used for ATP formation. It consists of a core antenna complex that captures photons, and an electron transfer chain that converts photonic excitation into a charge separation. This subunit is found at the monomer-monomer interface and is required for correct PSII assembly and/or dimerization. The polypeptide is Photosystem II reaction center protein L (Cedrus deodara (Deodar cedar)).